Consider the following 691-residue polypeptide: Elongation factor G (691 aa).

Positions 8 to 282 constitute a tr-type G domain; that stretch reads ERVRNIGIAA…AVVDYLPAPI (275 aa). Residues 17 to 24, 81 to 85, and 135 to 138 each bind GTP; these read AHIDAGKT, DTPGH, and NKMD.

Belongs to the TRAFAC class translation factor GTPase superfamily. Classic translation factor GTPase family. EF-G/EF-2 subfamily.

It localises to the cytoplasm. Its function is as follows. Catalyzes the GTP-dependent ribosomal translocation step during translation elongation. During this step, the ribosome changes from the pre-translocational (PRE) to the post-translocational (POST) state as the newly formed A-site-bound peptidyl-tRNA and P-site-bound deacylated tRNA move to the P and E sites, respectively. Catalyzes the coordinated movement of the two tRNA molecules, the mRNA and conformational changes in the ribosome. The protein is Elongation factor G of Prochlorococcus marinus subsp. pastoris (strain CCMP1986 / NIES-2087 / MED4).